The primary structure comprises 431 residues: Divergent protein kinase domain 1B (431 aa).

The Cytoplasmic segment spans residues 1-30 (MRRLRRLAHLVLFCPFSKRLQGRLPGLRVR). The May mediate ER retention motif lies at 5 to 6 (RR). Residues 31-51 (CIFLAWLGVFAGSWLVYVHYS) traverse the membrane as a helical segment. Residues 52–431 (SYSERCRGHV…WKKISNTKYS (380 aa)) are Lumenal-facing. Disulfide bonds link Cys-57–Cys-94 and Cys-62–Cys-117.

This sequence belongs to the DIPK family. Among the many cysteines in the lumenal domain, most are probably involved in disulfide bonds.

It localises to the endoplasmic reticulum membrane. This chain is Divergent protein kinase domain 1B, found in Homo sapiens (Human).